A 611-amino-acid chain; its full sequence is Threonine--tRNA ligase (611 aa).

Residues Asp-211–Pro-509 form a catalytic region. 3 residues coordinate Zn(2+): Cys-310, His-361, and His-486.

Belongs to the class-II aminoacyl-tRNA synthetase family. In terms of assembly, homodimer. Zn(2+) serves as cofactor.

The protein resides in the cytoplasm. It catalyses the reaction tRNA(Thr) + L-threonine + ATP = L-threonyl-tRNA(Thr) + AMP + diphosphate + H(+). Its function is as follows. Catalyzes the attachment of threonine to tRNA(Thr) in a two-step reaction: L-threonine is first activated by ATP to form Thr-AMP and then transferred to the acceptor end of tRNA(Thr). Also edits incorrectly charged L-seryl-tRNA(Thr). This chain is Threonine--tRNA ligase, found in Nautilia profundicola (strain ATCC BAA-1463 / DSM 18972 / AmH).